A 142-amino-acid chain; its full sequence is Nucleoside diphosphate kinase (142 aa).

The ATP site is built by Lys-11, Phe-59, Arg-87, Thr-93, Arg-104, and Asn-114. His-117 acts as the Pros-phosphohistidine intermediate in catalysis.

This sequence belongs to the NDK family. Homotetramer. Mg(2+) serves as cofactor.

It is found in the cytoplasm. The catalysed reaction is dZDP + ATP = dZTP + ADP. It catalyses the reaction a 2'-deoxyribonucleoside 5'-diphosphate + ATP = a 2'-deoxyribonucleoside 5'-triphosphate + ADP. It carries out the reaction a ribonucleoside 5'-diphosphate + ATP = a ribonucleoside 5'-triphosphate + ADP. The protein operates within purine metabolism. In terms of biological role, major role in the synthesis of nucleoside triphosphates other than ATP. The ATP gamma phosphate is transferred to the NDP beta phosphate via a ping-pong mechanism, using a phosphorylated active-site intermediate. (Microbial infection) Catalyzes the phosphorylation of dZDP to dZTP, when the bacterium is infected by a phage that produces the substrate for the synthesis of dZTP (2- amino-2'-deoxyadenosine 5'-triphosphate), which is then used by the phage as a DNA polymerase substrate. This chain is Nucleoside diphosphate kinase, found in Vibrio cholerae serotype O1 (strain ATCC 39315 / El Tor Inaba N16961).